Here is a 204-residue protein sequence, read N- to C-terminus: Probable chorismate pyruvate-lyase (204 aa).

3 residues coordinate substrate: R75, L113, and E160.

Belongs to the UbiC family.

The protein localises to the cytoplasm. It catalyses the reaction chorismate = 4-hydroxybenzoate + pyruvate. It participates in cofactor biosynthesis; ubiquinone biosynthesis. Functionally, removes the pyruvyl group from chorismate, with concomitant aromatization of the ring, to provide 4-hydroxybenzoate (4HB) for the ubiquinone pathway. The protein is Probable chorismate pyruvate-lyase of Alcanivorax borkumensis (strain ATCC 700651 / DSM 11573 / NCIMB 13689 / SK2).